The primary structure comprises 423 residues: SH2 domain-containing protein 5 (423 aa).

The region spanning 28–146 (AQYVGLLPCG…LLCRSFQLAY (119 aa)) is the PID domain. Positions 296 to 392 (WAFAGISRPC…LDMGRLNPTY (97 aa)) constitute an SH2 domain. The disordered stretch occupies residues 394 to 423 (EQDCGPLGRPPRTLRPLSHAKSEAELQGLG). Low complexity predominate over residues 398–410 (GPLGRPPRTLRPL).

Interacts with BCR.

It localises to the postsynaptic density. In terms of biological role, may be involved in synaptic plasticity regulation through the control of Rac-GTP levels. This Pongo abelii (Sumatran orangutan) protein is SH2 domain-containing protein 5.